Here is a 353-residue protein sequence, read N- to C-terminus: tRNA N(3)-cytidine methyltransferase METTL2 (353 aa).

A disordered region spans residues 1-37; that stretch reads MAAPVVAADSPVIENMPETAGGATENSAEAQKRPQFG. S-adenosyl-L-methionine contacts are provided by tryptophan 93, tyrosine 97, glycine 165, aspartate 190, aspartate 216, and isoleucine 237.

The protein belongs to the methyltransferase superfamily. METL family. In terms of assembly, monomer.

The protein resides in the cytoplasm. It catalyses the reaction cytidine(32) in tRNA(Thr) + S-adenosyl-L-methionine = N(3)-methylcytidine(32) in tRNA(Thr) + S-adenosyl-L-homocysteine + H(+). The catalysed reaction is cytidine(32) in tRNA(Arg)(CCU) + S-adenosyl-L-methionine = N(3)-methylcytidine(32) in tRNA(Arg)(CCU) + S-adenosyl-L-homocysteine + H(+). In terms of biological role, S-adenosyl-L-methionine-dependent methyltransferase that mediates N(3)-methylcytidine modification of residue 32 of the tRNA anticodon loop of tRNA(Thr)(UGU) and tRNA(Arg)(CCU). N(3)-methylcytidine methylation by mettl2a requires the N6-threonylcarbamoylation of tRNA (t6A37) by the EKC/KEOPS complex as prerequisite. The protein is tRNA N(3)-cytidine methyltransferase METTL2 (mettl2a) of Danio rerio (Zebrafish).